A 119-amino-acid chain; its full sequence is MARVKRAMNARKRHKKVLKLAKGYYGGKSKLFKTANESVIRALRNAYVGRKLKKRDYRKLWIARINAATRMNGLSYSKFMNGIKNAGIDINRKMLSEIAINDPKAFAELVDVAKKQLNA.

It belongs to the bacterial ribosomal protein bL20 family.

In terms of biological role, binds directly to 23S ribosomal RNA and is necessary for the in vitro assembly process of the 50S ribosomal subunit. It is not involved in the protein synthesizing functions of that subunit. In Clostridium botulinum (strain ATCC 19397 / Type A), this protein is Large ribosomal subunit protein bL20.